Reading from the N-terminus, the 272-residue chain is Ribosome maturation factor RimP (272 aa).

Residues 209–272 (QNLGILPPPP…RGDIDPPEGD (64 aa)) are disordered. Over residues 250-266 (NTKEHRLAAERLRRGDI) the composition is skewed to basic and acidic residues.

Belongs to the RimP family.

The protein resides in the cytoplasm. Its function is as follows. Required for maturation of 30S ribosomal subunits. In Rhodopseudomonas palustris (strain BisA53), this protein is Ribosome maturation factor RimP.